Consider the following 487-residue polypeptide: L-tartrate/succinate antiporter (487 aa).

The next 14 helical transmembrane spans lie at 10-30, 33-53, 54-74, 93-113, 137-157, 189-209, 230-250, 292-312, 313-333, 340-360, 370-390, 393-413, 418-438, and 465-485; these read YLAP…AGLE, TWLY…EPVP, GAVV…WLLF, WAVS…FMFG, TLFL…VTPS, IGSY…AIFL, LSWG…VLLV, LMVG…AAMV, GYSV…DIVS, VFFW…TGFI, SLSG…FYLL, FFAS…AAAL, IPLP…SILT, and IFGL…MPVV.

This sequence belongs to the SLC13A/DASS transporter (TC 2.A.47) family. DIT1 subfamily.

It is found in the cell inner membrane. The enzyme catalyses (2R,3R)-tartrate(out) + succinate(in) = (2R,3R)-tartrate(in) + succinate(out). Catalyzes the uptake of tartrate in exchange for intracellular succinate. Essential for anaerobic L-tartrate fermentation. This is L-tartrate/succinate antiporter (ttdT) from Shigella dysenteriae serotype 1 (strain Sd197).